The chain runs to 124 residues: T cell receptor beta variable 13 (124 aa).

An N-terminal signal peptide occupies residues 1–31; it reads MLSPDLPDSAWNTRLLCRVMLCLLGAGSVAA. In terms of domain architecture, Ig-like spans 32–124; that stretch reads GVIQSPRHLI…SALYFCASSL (93 aa). Cys52 and Cys120 are oxidised to a cystine. A glycan (N-linked (GlcNAc...) asparagine) is linked at Asn106.

Alpha-beta TR is a heterodimer composed of an alpha and beta chain; disulfide-linked. The alpha-beta TR is associated with the transmembrane signaling CD3 coreceptor proteins to form the TR-CD3 (TcR or TCR). The assembly of alpha-beta TR heterodimers with CD3 occurs in the endoplasmic reticulum where a single alpha-beta TR heterodimer associates with one CD3D-CD3E heterodimer, one CD3G-CD3E heterodimer and one CD247 homodimer forming a stable octameric structure. CD3D-CD3E and CD3G-CD3E heterodimers preferentially associate with TR alpha and TR beta chains, respectively. The association of the CD247 homodimer is the last step of TcR assembly in the endoplasmic reticulum and is required for transport to the cell surface.

The protein resides in the cell membrane. Functionally, v region of the variable domain of T cell receptor (TR) beta chain that participates in the antigen recognition. Alpha-beta T cell receptors are antigen specific receptors which are essential to the immune response and are present on the cell surface of T lymphocytes. Recognize peptide-major histocompatibility (MH) (pMH) complexes that are displayed by antigen presenting cells (APC), a prerequisite for efficient T cell adaptive immunity against pathogens. Binding of alpha-beta TR to pMH complex initiates TR-CD3 clustering on the cell surface and intracellular activation of LCK that phosphorylates the ITAM motifs of CD3G, CD3D, CD3E and CD247 enabling the recruitment of ZAP70. In turn ZAP70 phosphorylates LAT, which recruits numerous signaling molecules to form the LAT signalosome. The LAT signalosome propagates signal branching to three major signaling pathways, the calcium, the mitogen-activated protein kinase (MAPK) kinase and the nuclear factor NF-kappa-B (NF-kB) pathways, leading to the mobilization of transcription factors that are critical for gene expression and essential for T cell growth and differentiation. The T cell repertoire is generated in the thymus, by V-(D)-J rearrangement. This repertoire is then shaped by intrathymic selection events to generate a peripheral T cell pool of self-MH restricted, non-autoaggressive T cells. Post-thymic interaction of alpha-beta TR with the pMH complexes shapes TR structural and functional avidity. The sequence is that of T cell receptor beta variable 13 from Homo sapiens (Human).